Reading from the N-terminus, the 552-residue chain is Glutamate--tRNA ligase (552 aa).

The 'HIGH' region signature appears at 102–112; it reads PNPSGPLHIGH.

Belongs to the class-I aminoacyl-tRNA synthetase family. Glutamate--tRNA ligase type 2 subfamily.

The protein localises to the cytoplasm. The enzyme catalyses tRNA(Glu) + L-glutamate + ATP = L-glutamyl-tRNA(Glu) + AMP + diphosphate. In terms of biological role, catalyzes the attachment of glutamate to tRNA(Glu) in a two-step reaction: glutamate is first activated by ATP to form Glu-AMP and then transferred to the acceptor end of tRNA(Glu). In Methanothermobacter marburgensis (strain ATCC BAA-927 / DSM 2133 / JCM 14651 / NBRC 100331 / OCM 82 / Marburg) (Methanobacterium thermoautotrophicum), this protein is Glutamate--tRNA ligase.